We begin with the raw amino-acid sequence, 173 residues long: Cytochrome c-type biogenesis protein CcmE (173 aa).

The Cytoplasmic portion of the chain corresponds to 1–8 (MNPRRKSR). Residues 9 to 29 (FKLVIFVVLGIAIASGLMLYA) traverse the membrane as a helical; Signal-anchor for type II membrane protein segment. At 30-173 (LRQNIDLFYT…RDRQEKEGAK (144 aa)) the chain is on the periplasmic side. Residues His131 and Tyr135 each contribute to the heme site. Residues 152–173 (GIEAADLKGESARDRQEKEGAK) form a disordered region. A compositionally biased stretch (basic and acidic residues) spans 156 to 173 (ADLKGESARDRQEKEGAK).

Belongs to the CcmE/CycJ family.

It is found in the cell inner membrane. Functionally, heme chaperone required for the biogenesis of c-type cytochromes. Transiently binds heme delivered by CcmC and transfers the heme to apo-cytochromes in a process facilitated by CcmF and CcmH. The polypeptide is Cytochrome c-type biogenesis protein CcmE (Haemophilus influenzae (strain ATCC 51907 / DSM 11121 / KW20 / Rd)).